A 575-amino-acid chain; its full sequence is Interleukin-1 receptor-like 2 (575 aa).

The N-terminal stretch at 1-19 is a signal peptide; the sequence is MWSLLLCGLSIALPLSVTA. Ig-like C2-type domains are found at residues 20 to 111, 126 to 211, and 222 to 318; these read DGCK…VNLT, PNLS…VLNG, and YGGS…MCHA. The Extracellular portion of the chain corresponds to 20-335; sequence DGCKDIFMKN…ILQLPAPDFR (316 aa). 9 N-linked (GlcNAc...) asparagine glycosylation sites follow: Asn41, Asn59, Asn109, Asn127, Asn184, Asn234, Asn250, Asn266, and Asn299. Residues Cys42 and Cys95 are joined by a disulfide bond. A disulfide bridge connects residues Cys146 and Cys195. Cys249 and Cys316 form a disulfide bridge. A helical membrane pass occupies residues 336-356; it reads AYLIGGLIALVAVAVSVVYIY. The Cytoplasmic portion of the chain corresponds to 357-575; sequence NIFKIDIVLW…RRKKCTLTTG (219 aa). Residues 381–536 form the TIR domain; the sequence is KLYDAYVLYP…KFWKTVRYHM (156 aa). Glu467 is a catalytic residue.

The protein belongs to the interleukin-1 receptor family. In terms of assembly, interacts with IL1RAP; the association is enhanced by IL36B indicative for an functional signaling complex and inhibited by IL36RN. Expressed in synovial fibroblasts and articular chondrocytes. Expressed in keratinocytes and monocyte-derived dendritic cells. Expressed in monocytes and myeloid dendritic cells; at protein level.

It is found in the membrane. The catalysed reaction is NAD(+) + H2O = ADP-D-ribose + nicotinamide + H(+). Functionally, receptor for interleukin-36 (IL36A, IL36B and IL36G). After binding to interleukin-36 associates with the coreceptor IL1RAP to form the interleukin-36 receptor complex which mediates interleukin-36-dependent activation of NF-kappa-B, MAPK and other pathways. The IL-36 signaling system is thought to be present in epithelial barriers and to take part in local inflammatory response; it is similar to the IL-1 system. Seems to be involved in skin inflammatory response by induction of the IL-23/IL-17/IL-22 pathway. The protein is Interleukin-1 receptor-like 2 (IL1RL2) of Homo sapiens (Human).